The following is a 617-amino-acid chain: Lipoteichoic acid synthase-like YvgJ (617 aa).

The Cytoplasmic segment spans residues Met1 to Arg10. Residues Phe11–Phe31 traverse the membrane as a helical segment. The Extracellular segment spans residues Asp32–Glu41. The helical transmembrane segment at Leu42–Leu62 threads the bilayer. At Lys63 to Arg68 the chain is on the cytoplasmic side. Residues Ala69 to Tyr89 form a helical membrane-spanning segment. Topologically, residues Gly90 to Lys115 are extracellular. The chain crosses the membrane as a helical span at residues Glu116–Ala136. At Arg137 to Arg153 the chain is on the cytoplasmic side. The chain crosses the membrane as a helical span at residues Tyr154–Val171. At Gln172–Glu617 the chain is on the extracellular side. Residues Glu251 and Thr293 each contribute to the Mn(2+) site. Thr293 is a catalytic residue. His408 serves as a coordination point for substrate. The Mn(2+) site is built by Asp467 and His468.

Belongs to the LTA synthase family. In terms of processing, proteolytically cleaved.

Its subcellular location is the cell membrane. The protein resides in the secreted. This is Lipoteichoic acid synthase-like YvgJ (yvgJ) from Bacillus subtilis (strain 168).